Here is a 215-residue protein sequence, read N- to C-terminus: Nascent polypeptide-associated complex subunit alpha (215 aa).

Positions 1 to 81 are disordered; the sequence is MPGEATETVP…SEKKARKAMS (81 aa). The segment covering 9–28 has biased composition (polar residues); that stretch reads VPATEQELPQPQAETGSGTE. The span at 29–42 shows a compositional bias: acidic residues; that stretch reads SDSDESVPELEEQD. Ser-43 carries the phosphoserine; by ILK1 modification. Over residues 44–57 the composition is skewed to low complexity; that stretch reads TQATTQQAQLAAAA. Positions 69 to 80 are required for DNA-binding; the sequence is QSRSEKKARKAM. One can recognise an NAC-A/B domain in the interval 70 to 135; that stretch reads SRSEKKARKA…AKIEDLSQQA (66 aa). The segment at 93 to 108 is RNA/DNA-binding; it reads RVTIRKSKNILFVITK. Ser-132 bears the Phosphoserine mark. Lys-142 is modified (N6-acetyllysine; alternate). Lys-142 participates in a covalent cross-link: Glycyl lysine isopeptide (Lys-Gly) (interchain with G-Cter in SUMO2); alternate. A Phosphothreonine; by GSK3-beta modification is found at Thr-159. The residue at position 161 (Thr-161) is a Phosphothreonine. A phosphoserine mark is found at Ser-166, Ser-186, Ser-191, and Ser-203. A UBA domain is found at 176 to 213; it reads VEVKDIELVMSQANVSRAKAVRALKNNSNDIVNAIMEL.

The protein belongs to the NAC-alpha family. In terms of assembly, interacts with TBP and JUN. Part of the nascent polypeptide-associated complex (NAC), which is a heterodimer of NACA and BTF3 (via NAC-A/B domains). NAC associates with ribosomes through the BTF3/NACB subunit and contacts the ribosomal protein L23, which is positioned near the exiting site. Both subunits can contact nascent polypeptide chains. NACA may also form homodimers, and only this form binds DNA. Post-translationally, phosphorylation of Thr-159 by GSK3B may promote proteasome mediated degradation. Phosphorylation of Ser-43 by ILK during cell adhesion may promote nuclear localization. In terms of tissue distribution, ubiquitously expressed.

It localises to the cytoplasm. It is found in the nucleus. Prevents inappropriate targeting of non-secretory polypeptides to the endoplasmic reticulum (ER). Binds to nascent polypeptide chains as they emerge from the ribosome and blocks their interaction with the signal recognition particle (SRP), which normally targets nascent secretory peptides to the ER. Also reduces the inherent affinity of ribosomes for protein translocation sites in the ER membrane (M sites). May act as a specific coactivator for JUN, binding to DNA and stabilizing the interaction of JUN homodimers with target gene promoters. The sequence is that of Nascent polypeptide-associated complex subunit alpha (NACA) from Homo sapiens (Human).